A 734-amino-acid chain; its full sequence is MELRFPRFSQGLAQDPTTRRIWFGIATAHDFESHDDITEERLYQNIFASHFGQLAIIFLWTSGNLFHVAWQGNFESWIQDPLHVRPIAHAIWDPHFGQPAVEAFTRGGAAGPVNIAYSGVYQWWYTIGLRTNEDLYTGALFLLFLSTLSLIASWLHLQPKWKPSLSWFKNAESRLNHHLSGLFGVSSLAWTGHLVHVAIPASRGEYVRWNNFLDVLPYPQGLGPLLTGQWNLYAQNPDSSNHLFGTAQGAGTAILTLLGGFHPQTQSLWLTDMAHHHLAIAFIFLIAGHMYRTNFGIGHSIKDLLEAHTPPGGRLGRGHKGLYDTINNSIHFQLGLALASLGVITSLVAQHMYSLPPYAFIAQDFTTQAALYTHHQYIAGFIMTGAFAHGAIFFIRDYNPEQNEDNVLARMLDHKEAIISHLSWASLFLGFHTLGLYVHNDVMLAFGTPEKQILIEPIFAQWIQSAHGKTTYGFDILLSSTNGPAFNAGRSLWLPGWLNAVNENSNSLFLTIGPGDFLVHHAIALGLHTTTLILVKGALDARGSKLMPDKKDFGYSFPCDGPGRGGTCDISAWDAFYLAVFWMLNTIGWVTFYWHWKHITLWQGNVSQFNESSTYLMGWLRDYLWLNSSQLINGYNPFGMNSLSVWAWMFLFGHLVWATGFMFLISWRGYWQELIETLAWAHERTPLANLIRWRDKPVALSIVQARLVGLAHFSVGYIFTYAAFLIASTSGKFG.

Transmembrane regions (helical) follow at residues 46–69 (IFAS…FHVA), 135–158 (LYTG…LHLQ), 175–199 (LNHH…HVAI), 273–291 (MAHH…GHMY), 330–353 (IHFQ…QHMY), 369–395 (AALY…IFFI), 417–439 (AIIS…LYVH), and 517–535 (FLVH…LILV). 2 residues coordinate [4Fe-4S] cluster: Cys559 and Cys568. The next 2 helical transmembrane spans lie at 575–596 (AFYL…YWHW) and 643–665 (LSVW…MFLI). His654, Met662, and Tyr670 together coordinate chlorophyll a. Trp671 is a binding site for phylloquinone. Residues 707-727 (LVGLAHFSVGYIFTYAAFLIA) traverse the membrane as a helical segment.

It belongs to the PsaA/PsaB family. As to quaternary structure, the PsaA/B heterodimer binds the P700 chlorophyll special pair and subsequent electron acceptors. PSI consists of a core antenna complex that captures photons, and an electron transfer chain that converts photonic excitation into a charge separation. The eukaryotic PSI reaction center is composed of at least 11 subunits. P700 is a chlorophyll a/chlorophyll a' dimer, A0 is one or more chlorophyll a, A1 is one or both phylloquinones and FX is a shared 4Fe-4S iron-sulfur center. serves as cofactor.

Its subcellular location is the plastid. The protein resides in the chloroplast thylakoid membrane. It carries out the reaction reduced [plastocyanin] + hnu + oxidized [2Fe-2S]-[ferredoxin] = oxidized [plastocyanin] + reduced [2Fe-2S]-[ferredoxin]. In terms of biological role, psaA and PsaB bind P700, the primary electron donor of photosystem I (PSI), as well as the electron acceptors A0, A1 and FX. PSI is a plastocyanin-ferredoxin oxidoreductase, converting photonic excitation into a charge separation, which transfers an electron from the donor P700 chlorophyll pair to the spectroscopically characterized acceptors A0, A1, FX, FA and FB in turn. Oxidized P700 is reduced on the lumenal side of the thylakoid membrane by plastocyanin. In Hordeum vulgare (Barley), this protein is Photosystem I P700 chlorophyll a apoprotein A2.